The primary structure comprises 398 residues: UDP-N-acetylglucosamine--N-acetylmuramyl-(pentapeptide) pyrophosphoryl-undecaprenol N-acetylglucosamine transferase (398 aa).

Residues 15–17 (TGG), N125, R168, S196, and Q297 contribute to the UDP-N-acetyl-alpha-D-glucosamine site.

The protein belongs to the glycosyltransferase 28 family. MurG subfamily.

The protein resides in the cell inner membrane. It catalyses the reaction di-trans,octa-cis-undecaprenyl diphospho-N-acetyl-alpha-D-muramoyl-L-alanyl-D-glutamyl-meso-2,6-diaminopimeloyl-D-alanyl-D-alanine + UDP-N-acetyl-alpha-D-glucosamine = di-trans,octa-cis-undecaprenyl diphospho-[N-acetyl-alpha-D-glucosaminyl-(1-&gt;4)]-N-acetyl-alpha-D-muramoyl-L-alanyl-D-glutamyl-meso-2,6-diaminopimeloyl-D-alanyl-D-alanine + UDP + H(+). It participates in cell wall biogenesis; peptidoglycan biosynthesis. Functionally, cell wall formation. Catalyzes the transfer of a GlcNAc subunit on undecaprenyl-pyrophosphoryl-MurNAc-pentapeptide (lipid intermediate I) to form undecaprenyl-pyrophosphoryl-MurNAc-(pentapeptide)GlcNAc (lipid intermediate II). This chain is UDP-N-acetylglucosamine--N-acetylmuramyl-(pentapeptide) pyrophosphoryl-undecaprenol N-acetylglucosamine transferase, found in Erythrobacter litoralis (strain HTCC2594).